A 298-amino-acid chain; its full sequence is Heterogeneous nuclear ribonucleoprotein C (298 aa).

Position 2 is an N-acetylalanine (Ala-2). Glycyl lysine isopeptide (Lys-Gly) (interchain with G-Cter in SUMO2) cross-links involve residues Lys-8, Lys-50, Lys-89, and Lys-94. The 72-residue stretch at 16–87 folds into the RRM domain; sequence SRVFIGNLNT…QVLDINLAAE (72 aa). Position 108 is a phosphoserine (Ser-108). 2 disordered regions span residues 131 to 177 and 204 to 298; these read PPPP…VKGD and EKEQ…EDDS. The Nuclear localization signal motif lies at 142–148; that stretch reads PSKRQRV. 2 positions are modified to phosphoserine: Ser-149 and Ser-153. The segment covering 162 to 173 has biased composition (low complexity); sequence SKSGQRGSSSKS. Lys-163 is subject to N6-acetyllysine; alternate. A Glycyl lysine isopeptide (Lys-Gly) (interchain with G-Cter in SUMO2); alternate cross-link involves residue Lys-163. Residues 176-211 adopt a coiled-coil conformation; the sequence is GDDLQAIKKELTQIKQKVDSLLESLEKIEKEQSKQA. Lys-209 participates in a covalent cross-link: Glycyl lysine isopeptide (Lys-Gly) (interchain with G-Cter in SUMO2). Ser-214, Ser-216, and Ser-217 each carry phosphoserine. Lys-222 is covalently cross-linked (Glycyl lysine isopeptide (Lys-Gly) (interchain with G-Cter in SUMO2)). Lys-225 participates in a covalent cross-link: Glycyl lysine isopeptide (Lys-Gly) (interchain with G-Cter in SUMO2); alternate. Residue Lys-225 forms a Glycyl lysine isopeptide (Lys-Gly) (interchain with G-Cter in SUMO1); alternate linkage. Residues Ser-226, Ser-231, Ser-232, and Ser-234 each carry the phosphoserine modification. Over residues 235-246 the composition is skewed to basic and acidic residues; it reads VKKDETNVKMES. Glycyl lysine isopeptide (Lys-Gly) (interchain with G-Cter in SUMO2) cross-links involve residues Lys-236 and Lys-237. Lys-243 participates in a covalent cross-link: Glycyl lysine isopeptide (Lys-Gly) (interchain with G-Cter in SUMO2); alternate. Lys-243 participates in a covalent cross-link: Glycyl lysine isopeptide (Lys-Gly) (interchain with G-Cter in SUMO); alternate. 2 positions are modified to phosphoserine: Ser-246 and Ser-253. A compositionally biased stretch (acidic residues) spans 248 to 269; the sequence is AGADDSAEEGDLLDDDDNEDRG. The span at 270-279 shows a compositional bias: basic and acidic residues; the sequence is DDQLELKDDE. Over residues 280–298 the composition is skewed to acidic residues; that stretch reads KEPEEGEDDRDSANGEDDS. 2 positions are modified to phosphoserine: Ser-291 and Ser-298.

The protein belongs to the RRM HNRPC family. RALY subfamily. Tetramer composed of 3 copies of isoform C1 and 1 copy of isoform C2. Assembly of 3 tetramers with bound pre-mRNA gives rise to a 19S complex that interacts with HNRNPA2B1 tetramers. Component of the 40S hnRNP particle. Identified in the spliceosome C complex. Interacts with IGF2BP1. Interacts with PPIA/CYPA. Phosphorylated on Ser-253 and Ser-291 in resting cells. In terms of processing, sumoylated. Sumoylation reduces affinity for mRNA. Post-translationally, ubiquitinated and degraded after nucleo-cytoplasmic transport by YWHAE.

It is found in the nucleus. In terms of biological role, binds pre-mRNA and nucleates the assembly of 40S hnRNP particles. Interacts with poly-U tracts in the 3'-UTR or 5'-UTR of mRNA and modulates the stability and the level of translation of bound mRNA molecules. Single HNRNPC tetramers bind 230-240 nucleotides. Trimers of HNRNPC tetramers bind 700 nucleotides. May play a role in the early steps of spliceosome assembly and pre-mRNA splicing. N6-methyladenosine (m6A) has been shown to alter the local structure in mRNAs and long non-coding RNAs (lncRNAs) via a mechanism named 'm(6)A-switch', facilitating binding of HNRNPC, leading to regulation of mRNA splicing. This Rattus norvegicus (Rat) protein is Heterogeneous nuclear ribonucleoprotein C.